We begin with the raw amino-acid sequence, 226 residues long: Ribonuclease 3 (226 aa).

The 123-residue stretch at 6–128 (MKKLQKFIGY…IIASIFLDSN (123 aa)) folds into the RNase III domain. Glu-41 is a Mg(2+) binding site. Residue Asp-45 is part of the active site. Residues Asn-114 and Glu-117 each coordinate Mg(2+). Glu-117 is a catalytic residue. In terms of domain architecture, DRBM spans 155-225 (DPKTRLQEYL…AQNALIRLEV (71 aa)).

It belongs to the ribonuclease III family. As to quaternary structure, homodimer. Mg(2+) serves as cofactor.

It localises to the cytoplasm. The catalysed reaction is Endonucleolytic cleavage to 5'-phosphomonoester.. Its function is as follows. Digests double-stranded RNA. Involved in the processing of primary rRNA transcript to yield the immediate precursors to the large and small rRNAs (23S and 16S). Processes some mRNAs, and tRNAs when they are encoded in the rRNA operon. Processes pre-crRNA and tracrRNA of type II CRISPR loci if present in the organism. This chain is Ribonuclease 3, found in Buchnera aphidicola subsp. Cinara cedri (strain Cc).